The chain runs to 840 residues: MGLFDKIFGSYSDREVKRITPIVDKIDSLGPEMEKLSDEELKQKTFEFKDRYAKGESLDDMLPEAFAVCREASTRVLGMKHYREQLIGGTVLHQGRIAEMKTGEGKTLVATLPVYLNAIAGKGVHVITVNDYLATRDKEWMGQLYEFLGLTTGVIVHGLTNDQRREAYNADITYGTNNEFGFDYLRDNMVIYKEERVQRPLHYCIVDEVDSILIDEARTPLIISGAGSKSTDLYKIADFFVKKLREEEDYTIDEKAHAAMLTDKGVAEAEKAFGIENYADANNMELQHHITQALKANYVMKRDKDYMVKDDEIAIVDEFTGRLMEGRRYSDGLHQAIEAKEGVKVQRESKTLATITFQNYFRMYTKLAGMTGTALTEETEFREIYGLDVVVIPTHRPVQREDHSDLVFKTAKGKYDAIVEEIIETHKTGQPVLVGTTSIEKSEYLSSLLKKKGVPHKVLNARYHEQEAEIVSHAGELGNITIATNMAGRGTDIKLGEGVLEVGGLKIIGTERHESRRIDNQLRGRSGRQGDKGHSRFYISLEDDLMRIFGSEKLQSVVDRLGLEETEAIESKMVTKSIENAQKKVEGNNFDIRKTLLGYDDVMNKQREVIYKQRSQVLEGENLEDSVQAMIEDVVTSAVQAHLGNIDEDDFEKELGDLIKYLEDIMLPHGKFTVEELKTSSNEEITRKFIECAREIYKEKEEFVGSEQMREIERVIILRVVDTKWMDHIDDMDHLKQGIGLRAYKQQDPTQAYQMEGSAMFDEMINNIKIDTVRYLFHVKVEAEKPQRERVAKETGASHGGDSQEVKKKPVKKEPKVGRNDLCPCGSGKKYKSCCGREVV.

Residues Q85, 103-107 (GEGKT), and D492 contribute to the ATP site. The segment at 787 to 822 (QRERVAKETGASHGGDSQEVKKKPVKKEPKVGRNDL) is disordered. A compositionally biased stretch (basic and acidic residues) spans 802–819 (DSQEVKKKPVKKEPKVGR). Residues C823, C825, C834, and C835 each coordinate Zn(2+).

It belongs to the SecA family. As to quaternary structure, monomer and homodimer. Part of the essential Sec protein translocation apparatus which comprises SecA, SecYEG and auxiliary proteins SecDF. Other proteins may also be involved. Requires Zn(2+) as cofactor.

It is found in the cell membrane. The protein resides in the cytoplasm. It carries out the reaction ATP + H2O + cellular proteinSide 1 = ADP + phosphate + cellular proteinSide 2.. Part of the Sec protein translocase complex. Interacts with the SecYEG preprotein conducting channel. Has a central role in coupling the hydrolysis of ATP to the transfer of proteins into and across the cell membrane, serving as an ATP-driven molecular motor driving the stepwise translocation of polypeptide chains across the membrane. This Clostridium perfringens (strain ATCC 13124 / DSM 756 / JCM 1290 / NCIMB 6125 / NCTC 8237 / Type A) protein is Protein translocase subunit SecA.